Consider the following 328-residue polypeptide: Serine protease 27 (328 aa).

The signal sequence occupies residues 1–22 (MRQPHITALLLLPLLLRSGTEG). A propeptide spans 23–37 (AEAMRACGHPRMFNR) (activation peptide). Positions 38-280 (MVGGEDALEG…HYQWIHQIIP (243 aa)) constitute a Peptidase S1 domain. A disulfide bridge connects residues Cys-63 and Cys-79. Residue His-78 is the Charge relay system of the active site. Asn-82 carries an N-linked (GlcNAc...) asparagine glycan. The active-site Charge relay system is Asp-127. Disulfide bonds link Cys-161/Cys-238, Cys-194/Cys-217, and Cys-228/Cys-256. Ser-232 serves as the catalytic Charge relay system.

This sequence belongs to the peptidase S1 family.

It localises to the secreted. The polypeptide is Serine protease 27 (Prss27) (Rattus norvegicus (Rat)).